The following is a 443-amino-acid chain: Ribosomal protein uS12 methylthiotransferase RimO (443 aa).

Residues 10–120 (PRVGFVSLGC…VMQAVHRHLP (111 aa)) enclose the MTTase N-terminal domain. [4Fe-4S] cluster contacts are provided by Cys-19, Cys-55, Cys-84, Cys-151, Cys-155, and Cys-158. One can recognise a Radical SAM core domain in the interval 137 to 375 (LTPQHYAYLK…DFQEDISTQR (239 aa)). Positions 377–443 (EAKIGREMTV…IHDLYAERVV (67 aa)) constitute a TRAM domain.

This sequence belongs to the methylthiotransferase family. RimO subfamily. [4Fe-4S] cluster is required as a cofactor.

The protein localises to the cytoplasm. The enzyme catalyses L-aspartate(89)-[ribosomal protein uS12]-hydrogen + (sulfur carrier)-SH + AH2 + 2 S-adenosyl-L-methionine = 3-methylsulfanyl-L-aspartate(89)-[ribosomal protein uS12]-hydrogen + (sulfur carrier)-H + 5'-deoxyadenosine + L-methionine + A + S-adenosyl-L-homocysteine + 2 H(+). Functionally, catalyzes the methylthiolation of an aspartic acid residue of ribosomal protein uS12. This Azoarcus sp. (strain BH72) protein is Ribosomal protein uS12 methylthiotransferase RimO.